The following is a 692-amino-acid chain: Elongation factor G (692 aa).

In terms of domain architecture, tr-type G spans 8–282; the sequence is EKTRNIGIMA…AIVDFLPAPT (275 aa). GTP-binding positions include 17–24, 81–85, and 135–138; these read AHIDAGKT, DTPGH, and NKMD.

This sequence belongs to the TRAFAC class translation factor GTPase superfamily. Classic translation factor GTPase family. EF-G/EF-2 subfamily.

The protein localises to the cytoplasm. Functionally, catalyzes the GTP-dependent ribosomal translocation step during translation elongation. During this step, the ribosome changes from the pre-translocational (PRE) to the post-translocational (POST) state as the newly formed A-site-bound peptidyl-tRNA and P-site-bound deacylated tRNA move to the P and E sites, respectively. Catalyzes the coordinated movement of the two tRNA molecules, the mRNA and conformational changes in the ribosome. This chain is Elongation factor G, found in Moorella thermoacetica (strain ATCC 39073 / JCM 9320).